The primary structure comprises 170 residues: MQMVINEMKQKAIYPGTFDPVTNGHIDIITRASTIFPELIVAVASNKNKRPYLSWESRISLLEESVGHLTGVRVVGFDNLLIDFVLEQNAGIILRGLRAVSDFEYEFQLAGMNRKLSKKVETLFLTPAEHLMYISSTLVREIAALNGDISQFVPPNVVRELKKRQNERSL.

Thr17 provides a ligand contact to substrate. Residues 17–18 (TF) and His25 each bind ATP. Substrate is bound by residues Lys49, Leu81, and Arg95. ATP-binding positions include 96–98 (GLR), Glu106, and 131–137 (LMYISST).

The protein belongs to the bacterial CoaD family. As to quaternary structure, homohexamer. Mg(2+) serves as cofactor.

It localises to the cytoplasm. The catalysed reaction is (R)-4'-phosphopantetheine + ATP + H(+) = 3'-dephospho-CoA + diphosphate. It functions in the pathway cofactor biosynthesis; coenzyme A biosynthesis; CoA from (R)-pantothenate: step 4/5. Its function is as follows. Reversibly transfers an adenylyl group from ATP to 4'-phosphopantetheine, yielding dephospho-CoA (dPCoA) and pyrophosphate. The polypeptide is Phosphopantetheine adenylyltransferase (Legionella pneumophila subsp. pneumophila (strain Philadelphia 1 / ATCC 33152 / DSM 7513)).